We begin with the raw amino-acid sequence, 61 residues long: Temporin-1Tb (61 aa).

The N-terminal stretch at 1–22 (MFTLKKSLLLLFFLGTINLSLC) is a signal peptide. The propeptide occupies 23–44 (EEERNAEEERRDEPDERDVQVE). Leu59 carries the leucine amide modification.

Belongs to the frog skin active peptide (FSAP) family. Temporin subfamily. In terms of assembly, homo-oligomerizes in membranes as homodimers, homotrimers, or even homotetramers. Oligomerizes in presence of LPS. In Gram-positive bacterial mimetic membranes, the aggregation is weakly pronounced, and penetration proceeds more rapidly and is deeper than in Gram-negative bacterial mimetic membranes where aggregation is high. Homo-oligomerization is prevented by temporin-L. As to expression, expressed by the skin glands.

Its subcellular location is the secreted. The protein localises to the target cell membrane. The protein resides in the target cell. It is found in the target cell cytoplasm. Its function is as follows. Amphipathic alpha-helical antimicrobial peptide with potent activity against Gram-positive bacteria, weak activity against Gram-negative bacteria, and moderate activity against fungi. Mainly acts by causing membrane permeabilization, but is unable to forme pore-like openings. Is also able to penetrate eukaryotic cells (keratinocytes), and kill intracellular S.aureus (both wild-type and MRSA) without injuring host cells. Shows inhibitory effect on biofilm formation of Gram-positive bacteria, but not of Gram-negative bacteria. Shows antiviral activity against herpes simplex virus 1 (HSV-1) by disrupting the viral envelope. Also displays anti-leishmania activity by damaging parasite membrane. Does not show hemolytic activity. Acts synergistically with temporin-L that improves temporin-1Tb activity by preventing its self-association in lipopolysaccharides (LPS). In vitro, promotes cell migration and wound healing. The protein is Temporin-1Tb of Rana temporaria (European common frog).